We begin with the raw amino-acid sequence, 394 residues long: Elongation factor Tu 1 (394 aa).

The tr-type G domain maps to 10 to 204 (KPHVNVGTIG…FLDSYIPEPE (195 aa)). Positions 19 to 26 (GHVDHGKT) are G1. A GTP-binding site is contributed by 19–26 (GHVDHGKT). A Mg(2+)-binding site is contributed by T26. A G2 region spans residues 60-64 (GITIN). A G3 region spans residues 81–84 (DCPG). GTP-binding positions include 81–85 (DCPGH) and 136–139 (NKCD). The G4 stretch occupies residues 136–139 (NKCD). Residues 174–176 (SAL) form a G5 region.

This sequence belongs to the TRAFAC class translation factor GTPase superfamily. Classic translation factor GTPase family. EF-Tu/EF-1A subfamily. As to quaternary structure, monomer.

The protein localises to the cytoplasm. It carries out the reaction GTP + H2O = GDP + phosphate + H(+). In terms of biological role, GTP hydrolase that promotes the GTP-dependent binding of aminoacyl-tRNA to the A-site of ribosomes during protein biosynthesis. This is Elongation factor Tu 1 from Shigella flexneri serotype 5b (strain 8401).